The chain runs to 642 residues: Threonine--tRNA ligase (642 aa).

Positions 1 to 61 (MPVITLPDGS…DTDAQLAIIT (61 aa)) constitute a TGS domain. Residues 243–534 (DHRKIGKQLD…LTEEFAGFFP (292 aa)) form a catalytic region. Residues C334, H385, and H511 each coordinate Zn(2+).

It belongs to the class-II aminoacyl-tRNA synthetase family. As to quaternary structure, homodimer. It depends on Zn(2+) as a cofactor.

Its subcellular location is the cytoplasm. The catalysed reaction is tRNA(Thr) + L-threonine + ATP = L-threonyl-tRNA(Thr) + AMP + diphosphate + H(+). Catalyzes the attachment of threonine to tRNA(Thr) in a two-step reaction: L-threonine is first activated by ATP to form Thr-AMP and then transferred to the acceptor end of tRNA(Thr). Also edits incorrectly charged L-seryl-tRNA(Thr). The polypeptide is Threonine--tRNA ligase (Pectobacterium carotovorum subsp. carotovorum (strain PC1)).